We begin with the raw amino-acid sequence, 116 residues long: PTS system galactose-specific EIIA component (116 aa).

The 99-residue stretch at 11-109 (DDYMGVVMGI…AVEVVGQERR (99 aa)) folds into the PTS EIIA type-3 domain. Histidine 85 (tele-phosphohistidine intermediate) is an active-site residue. Residue histidine 85 is modified to Phosphohistidine; by HPr. Residue aspartate 88 coordinates Mg(2+).

Homotrimer. Mg(2+) is required as a cofactor.

Its function is as follows. The phosphoenolpyruvate-dependent sugar phosphotransferase system (sugar PTS), a major carbohydrate active transport system, catalyzes the phosphorylation of incoming sugar substrates concomitantly with their translocation across the cell membrane. Involved in galactose transport with PtcB and Lmg_0963. The polypeptide is PTS system galactose-specific EIIA component (Lactococcus lactis subsp. cremoris (strain MG1363)).